The primary structure comprises 384 residues: Outer membrane protein assembly factor BamC (384 aa).

Residues Met-1 to Gly-23 form the signal peptide. Residue Cys-24 is the site of N-palmitoyl cysteine attachment. Cys-24 carries S-diacylglycerol cysteine lipidation. Disordered stretches follow at residues Leu-47–Lys-70 and Gln-251–Leu-273.

It belongs to the BamC family. In terms of assembly, part of the Bam complex.

The protein resides in the cell outer membrane. In terms of biological role, part of the outer membrane protein assembly complex, which is involved in assembly and insertion of beta-barrel proteins into the outer membrane. This Accumulibacter regalis protein is Outer membrane protein assembly factor BamC.